The primary structure comprises 269 residues: uncharacterized protein (269 aa).

15-41 provides a ligand contact to NADP(+); that stretch reads QKSVLITGCSSGIGLESALELKRQGFH. Position 146 (S146) interacts with substrate. Y159 (proton acceptor) is an active-site residue.

This sequence belongs to the short-chain dehydrogenases/reductases (SDR) family.

This is an uncharacterized protein from Escherichia coli O6:H1 (strain CFT073 / ATCC 700928 / UPEC).